The following is an 842-amino-acid chain: Leucine--tRNA ligase (842 aa).

The 'HIGH' region motif lies at 44-55 (PYPSANGLHVGH). A 'KMSKS' region motif is present at residues 619–623 (KMSKS). Lys622 contacts ATP.

The protein belongs to the class-I aminoacyl-tRNA synthetase family.

It is found in the cytoplasm. It catalyses the reaction tRNA(Leu) + L-leucine + ATP = L-leucyl-tRNA(Leu) + AMP + diphosphate. This Borrelia hermsii (strain HS1 / DAH) protein is Leucine--tRNA ligase.